Reading from the N-terminus, the 629-residue chain is Natural resistance-associated macrophage protein 2 homolog (629 aa).

At 1 to 151 the chain is on the cytoplasmic side; it reads MNNNNNNKKL…KSKFSIKKLK (151 aa). Residues 50–119 form a disordered region; that stretch reads NVVNGSIEDS…SDIDSSGDSI (70 aa). A compositionally biased stretch (low complexity) spans 62–85; the sequence is QQQQQQQQQQQQQQQQQQQQQQQQ. Over residues 96–105 the composition is skewed to basic and acidic residues; that stretch reads DKPFQDRDSN. Positions 106-118 are enriched in low complexity; the sequence is IGDGSDIDSSGDS. A helical transmembrane segment spans residues 152-172; that stretch reads SFLGPALFISVGYMDPGNWAT. Over 173-182 the chain is Extracellular; the sequence is DLEGGSRFGY. A helical membrane pass occupies residues 183–203; that stretch reads QLMWVLLFSNIMALFLQTLVI. Residues 204–224 are Cytoplasmic-facing; sequence KLALVTKNDLAQQCRKEYSKT. A helical transmembrane segment spans residues 225-245; sequence VNIFLWLILELAIISTDLAEV. The Extracellular segment spans residues 246–253; it reads IGTAIGLN. A helical transmembrane segment spans residues 254-274; that stretch reads ILFGLPLIAGVAITSLDTLLF. Topologically, residues 275-286 are cytoplasmic; the sequence is LAIQRWGIRKLE. A helical transmembrane segment spans residues 287–307; the sequence is LLILLLLSMITMCFVIELFLS. At 308 to 326 the chain is on the extracellular side; the sequence is KPIASEVFSGFVPRLNSDS. Residues 327–347 traverse the membrane as a helical segment; it reads VMVATGIVGATTMPHNLFLHG. At 348–376 the chain is on the cytoplasmic side; sequence SVVKSRKIPNDRRKSVIKQAYRYNVIDTV. A helical membrane pass occupies residues 377 to 397; that stretch reads LALNCAFFVNIAILMLAASVF. Residues 398–421 are Extracellular-facing; it reads WKSNIQVTELSEAYRLLTKLMDGK. Residues 422–442 form a helical membrane-spanning segment; sequence LAAVLFGLGLFLAGQSSTITG. Over 443 to 468 the chain is Cytoplasmic; sequence TMAGQIVMEGFIKLRIKPWLRRFITR. The helical transmembrane segment at 469-489 threads the bilayer; that stretch reads LLAIIPAAIVIIVLGDKGTYT. Topologically, residues 490–491 are extracellular; it reads LL. A helical membrane pass occupies residues 492-512; sequence IISQVLLSIGLPFAVVPLIIF. Over 513-527 the chain is Cytoplasmic; sequence TSSYEIMGEFKNRLS. A helical transmembrane segment spans residues 528–548; it reads IIIINSIIALFIIGLNLATIF. At 549 to 565 the chain is on the extracellular side; sequence QLINDFLHNDSIISKCL. The N-linked (GlcNAc...) asparagine glycan is linked to asparagine 557. Residues 566 to 586 form a helical membrane-spanning segment; that stretch reads TIIFLIPLSIALCCLLLWLII. Topologically, residues 587 to 629 are cytoplasmic; that stretch reads SKINFFTNLLSKIFNNNNNNNNKNIINNNNNYSGNTINNQTIQ.

This sequence belongs to the NRAMP family.

It localises to the cell membrane. In terms of biological role, divalent transition metal (iron and manganese) transporter. The chain is Natural resistance-associated macrophage protein 2 homolog (nramp2) from Dictyostelium discoideum (Social amoeba).